The primary structure comprises 53 residues: Photosystem II reaction center protein K (53 aa).

Residues 1–16 constitute a propeptide that is removed on maturation; that stretch reads MLKFYLENVFHLIFFA. The helical transmembrane segment at 28 to 48 threads the bilayer; it reads IVNVMPIIPLFFFLLAFVWQA.

The protein belongs to the PsbK family. PSII is composed of 1 copy each of membrane proteins PsbA, PsbB, PsbC, PsbD, PsbE, PsbF, PsbH, PsbI, PsbJ, PsbK, PsbL, PsbM, PsbT, PsbX, PsbY, PsbZ, Psb30/Ycf12, at least 3 peripheral proteins of the oxygen-evolving complex and a large number of cofactors. It forms dimeric complexes.

The protein localises to the plastid. It localises to the chloroplast thylakoid membrane. Functionally, one of the components of the core complex of photosystem II (PSII). PSII is a light-driven water:plastoquinone oxidoreductase that uses light energy to abstract electrons from H(2)O, generating O(2) and a proton gradient subsequently used for ATP formation. It consists of a core antenna complex that captures photons, and an electron transfer chain that converts photonic excitation into a charge separation. The sequence is that of Photosystem II reaction center protein K from Huperzia lucidula (Shining clubmoss).